Here is a 542-residue protein sequence, read N- to C-terminus: Protein NODULATION SIGNALING PATHWAY 1 (542 aa).

A disordered region spans residues 73–150 (TSTTSLEPCG…SNCNSGNSKE (78 aa)). Over residues 92 to 103 (LPKKRNATDESS) the composition is skewed to basic and acidic residues. Residues 136 to 148 (AKANGSNCNSGNS) are compositionally biased toward low complexity. Residues 145-532 (SGNSKEGRWA…QPVSFCSLWK (388 aa)) form the GRAS domain. The segment at 152 to 214 (RWAEQLLNPC…HLSSSSSSPT (63 aa)) is leucine repeat I (LRI). Positions 233–332 (LLKFYEVSPW…GYNYYPRLLG (100 aa)) are VHIID. A VHIID motif is present at residues 269–273 (LHILD). The segment at 333–357 (YAQSININLQINRIENHSLQTLNAQ) is leucine repeat II (LRII). Residues 367 to 452 (LIVCAQFRLH…RESDERRVME (86 aa)) form a PFYRE region. Residues 455–532 (AAKALTNQRE…QPVSFCSLWK (78 aa)) form an SAW region.

The protein belongs to the GRAS family. In terms of tissue distribution, highly expressed in roots.

Its subcellular location is the nucleus. Functionally, transcriptional regulator essential for Nod-factor-induced gene expression. Acts downstream of calcium spiking and a calcium/calmodulin-dependent protein kinase required for activation of early nodulation gene expression. Acts as a common symbiosis gene that positively contributes to the early steps of the arbuscular mycorrhizal fungus and rhizobial infection processes in roots. Transcription factor involved in the positive regulation of the beta-carotene isomerase D27, which participates in a pathway leading to biosynthesis of strigolactones in roots. The sequence is that of Protein NODULATION SIGNALING PATHWAY 1 from Lotus japonicus (Lotus corniculatus var. japonicus).